The chain runs to 640 residues: MKISTTQIERRFEISSSLVGLIDGSFEIGNLFVIVFVSYFGSKLHRPKLIGIGCFLMGTGSILMALPHFFMGYYRYSKETNIDPSENSTSNLPNCLINQMLSLNRTPSEIIERGCVKESGSHMWIYVFMGNMLRGIGETPIVPLGISYIDDFAKEGHSSLYLGTVNVMGMTGLVFAFMLGSLFAKMYVDIGYVDLSTIRITPKDSRWVGAWWLGFLVSGIVSIISSIPFFFLPLNPNKPQKERKVSLFLHVLKTNDKRNQIANLTNRRKYITKNVTGFFQSLKSILTNPLYVIFVIFTLLHMSSYIASLTYIIKMVEQQYGWSASKTNFLLGVLALPAVAIGMFSGGYIIKKFKLSLVGLAKLAFCSATVHLLSQVLYFFLICESKSVAGLTLTYDGNSPVRSHVDVPLSYCNSECNCDESQWEPVCGNNGITYLSPCLAGCKSSSGNKEPIVFYNCSCVEVIGLQNKNYSAHLGECPRDDACTRKSYVYFVIQVLDAFLCAVGLTSYSVLVIRIVQPELKALAIGFHSMIMRSLGGILVPIYFGALIDTTCMKWSTNSCGARGACRIYNSTYLGRAFFGLKVALIFPVLVLLTVFIFVVRKKSHGKDTKVLENERQVMDEANLEFLNDSEHFVPSAEEQ.

Over 1 to 16 (MKISTTQIERRFEISS) the chain is Extracellular. The helical transmembrane segment at 17–37 (SLVGLIDGSFEIGNLFVIVFV) threads the bilayer. Topologically, residues 38–49 (SYFGSKLHRPKL) are cytoplasmic. A helical transmembrane segment spans residues 50–70 (IGIGCFLMGTGSILMALPHFF). Over 71–123 (MGYYRYSKETNIDPSENSTSNLPNCLINQMLSLNRTPSEIIERGCVKESGSHM) the chain is Extracellular. Residues 124–144 (WIYVFMGNMLRGIGETPIVPL) form a helical membrane-spanning segment. The Cytoplasmic portion of the chain corresponds to 145–159 (GISYIDDFAKEGHSS). The helical transmembrane segment at 160-180 (LYLGTVNVMGMTGLVFAFMLG) threads the bilayer. Residues 181–211 (SLFAKMYVDIGYVDLSTIRITPKDSRWVGAW) lie on the Extracellular side of the membrane. Residues 212–232 (WLGFLVSGIVSIISSIPFFFL) form a helical membrane-spanning segment. Topologically, residues 233-292 (PLNPNKPQKERKVSLFLHVLKTNDKRNQIANLTNRRKYITKNVTGFFQSLKSILTNPLYV) are cytoplasmic. The residue at position 246 (S246) is a Phosphoserine. A helical membrane pass occupies residues 293–313 (IFVIFTLLHMSSYIASLTYII). The Extracellular portion of the chain corresponds to 314 to 329 (KMVEQQYGWSASKTNF). Residues 330–350 (LLGVLALPAVAIGMFSGGYII) traverse the membrane as a helical segment. The Cytoplasmic segment spans residues 351–362 (KKFKLSLVGLAK). Residues 363–383 (LAFCSATVHLLSQVLYFFLIC) form a helical membrane-spanning segment. The Extracellular segment spans residues 384–492 (ESKSVAGLTL…CTRKSYVYFV (109 aa)). The region spanning 406–461 (DVPLSYCNSECNCDESQWEPVCGNNGITYLSPCLAGCKSSSGNKEPIVFYNCSCVE) is the Kazal-like domain. 3 cysteine pairs are disulfide-bonded: C412–C442, C418–C438, and C427–C459. Residues 493-513 (IQVLDAFLCAVGLTSYSVLVI) form a helical membrane-spanning segment. Topologically, residues 514 to 521 (RIVQPELK) are cytoplasmic. Residues 522–542 (ALAIGFHSMIMRSLGGILVPI) traverse the membrane as a helical segment. Residues 543-577 (YFGALIDTTCMKWSTNSCGARGACRIYNSTYLGRA) lie on the Extracellular side of the membrane. The helical transmembrane segment at 578-598 (FFGLKVALIFPVLVLLTVFIF) threads the bilayer. Residues 599–640 (VVRKKSHGKDTKVLENERQVMDEANLEFLNDSEHFVPSAEEQ) are Cytoplasmic-facing. Phosphoserine is present on S636.

The protein belongs to the organo anion transporter (TC 2.A.60) family.

Its subcellular location is the cell membrane. In Homo sapiens (Human), this protein is Putative solute carrier organic anion transporter family member 1B7 (SLCO1B7).